Here is a 488-residue protein sequence, read N- to C-terminus: Protein DETOXIFICATION 35 (488 aa).

The next 12 membrane-spanning stretches (helical) occupy residues 38–58 (LWMIAAPVGFNIICQYGVSSV), 73–93 (AVSISLSVIGTFSFGFLLGMG), 121–141 (IILFVSCFFLLPIYIFATPVL), 150–170 (IAVPAGQFTLLTIPQLFSLAF), 187–207 (IAWIGFVALSLHVIMLWLFII), 218–238 (LAFNITNWGTAIAQIVYVIGW), 262–282 (IASAVMLCLEIWYMMSIIVLT), 296–316 (SICMNINGLEAMLFIGINAAI), 336–356 (VYVTVFQSLLIGLVFMVAIII), 379–401 (AYLLGITMVLNSVQPVVSGVAVG), 408–428 (VAYINLGCYYIFGLPFGYLLG), and 439–459 (WSGMIAGTALQTLLLLIVLYK).

The protein belongs to the multi antimicrobial extrusion (MATE) (TC 2.A.66.1) family. As to expression, highly expressed in inflorescence tissues, especially in floral epidermal guard cells including those of the anthers, stigma, siliques and nectaries. Also detected in the meristematic zone of the root apex and in the elongation zone through to the fully expanded cells of the differentiation zone.

Its subcellular location is the vacuole membrane. Its function is as follows. Multidrug and toxin efflux transporter involved in flavonoid metabolism. Required for proper reproductive development. The chain is Protein DETOXIFICATION 35 from Arabidopsis thaliana (Mouse-ear cress).